Reading from the N-terminus, the 382-residue chain is V-type proton ATPase subunit C 1 (382 aa).

At Thr2 the chain carries N-acetylthreonine.

It belongs to the V-ATPase C subunit family. As to quaternary structure, V-ATPase is a heteromultimeric enzyme made up of two complexes: the ATP-hydrolytic V1 complex and the proton translocation V0 complex. The V1 complex consists of three catalytic AB heterodimers that form a heterohexamer, three peripheral stalks each consisting of EG heterodimers, one central rotor including subunits D and F, and the regulatory subunits C and H. The proton translocation complex V0 consists of the proton transport subunit a, a ring of proteolipid subunits c9c'', rotary subunit d, subunits e and f, and the accessory subunits ATP6AP1/Ac45 and ATP6AP2/PRR. As to expression, ubiquitous. Abundant in brain, liver, kidney and testis.

The protein localises to the cytoplasmic vesicle. It localises to the secretory vesicle. The protein resides in the synaptic vesicle membrane. Its subcellular location is the clathrin-coated vesicle membrane. In terms of biological role, subunit of the V1 complex of vacuolar(H+)-ATPase (V-ATPase), a multisubunit enzyme composed of a peripheral complex (V1) that hydrolyzes ATP and a membrane integral complex (V0) that translocates protons. V-ATPase is responsible for acidifying and maintaining the pH of intracellular compartments and in some cell types, is targeted to the plasma membrane, where it is responsible for acidifying the extracellular environment. Subunit C is necessary for the assembly of the catalytic sector of the enzyme and is likely to have a specific function in its catalytic activity. The sequence is that of V-type proton ATPase subunit C 1 (Atp6v1c1) from Mus musculus (Mouse).